Consider the following 87-residue polypeptide: U3-theraphotoxin-Hhn1a 10 (87 aa).

The N-terminal stretch at 1 to 24 (MVNMEASMFLTFAGLVLLFVVCYA) is a signal peptide. Residues 25–52 (SESEEKEFPKEMLSSIFAVDNDFKQEER) constitute a propeptide that is removed on maturation. Disulfide bonds link cysteine 54/cysteine 67, cysteine 61/cysteine 72, and cysteine 66/cysteine 79.

Belongs to the neurotoxin 10 (Hwtx-1) family. 51 (Hntx-8) subfamily. Hntx-8 sub-subfamily. As to expression, expressed by the venom gland.

The protein localises to the secreted. In terms of biological role, ion channel inhibitor. The chain is U3-theraphotoxin-Hhn1a 10 from Cyriopagopus hainanus (Chinese bird spider).